A 203-amino-acid polypeptide reads, in one-letter code: V-type ATP synthase subunit D (203 aa).

The protein belongs to the V-ATPase D subunit family.

Its function is as follows. Produces ATP from ADP in the presence of a proton gradient across the membrane. The polypeptide is V-type ATP synthase subunit D (Streptococcus pneumoniae serotype 19F (strain G54)).